We begin with the raw amino-acid sequence, 411 residues long: S-inosyl-L-homocysteine hydrolase (411 aa).

Substrate is bound by residues Asp121 and Glu146. Residue 147–149 coordinates NAD(+); sequence TTT. 2 residues coordinate substrate: Lys176 and Asp180. Residues Asn181, 210–215, Glu233, Asn268, 289–291, and Asn335 each bind NAD(+); these read GYGWCG and SGH.

This sequence belongs to the adenosylhomocysteinase family. NAD(+) serves as cofactor.

The protein localises to the cytoplasm. It catalyses the reaction S-inosyl-L-homocysteine + H2O = L-homocysteine + inosine. Its pathway is amino-acid biosynthesis; S-adenosyl-L-methionine biosynthesis. Catalyzes the hydrolysis of S-inosyl-L-homocysteine (SIH) to L-homocysteine (Hcy) and inosine. Likely functions in a S-adenosyl-L-methionine (SAM) recycling pathway from S-adenosyl-L-homocysteine (SAH) produced from SAM-dependent methylation reactions. Can also catalyze the reverse reaction in vitro, i.e. the synthesis of SIH from Hcy and inosine. This Methanosarcina mazei (strain ATCC BAA-159 / DSM 3647 / Goe1 / Go1 / JCM 11833 / OCM 88) (Methanosarcina frisia) protein is S-inosyl-L-homocysteine hydrolase.